The following is a 239-amino-acid chain: Ribose-5-phosphate isomerase A (239 aa).

Substrate-binding positions include 40 to 43 (SGST), 96 to 99 (DGAD), and 110 to 113 (KGGG). Glutamate 119 functions as the Proton acceptor in the catalytic mechanism. Position 137 (lysine 137) interacts with substrate.

The protein belongs to the ribose 5-phosphate isomerase family. Homodimer.

It carries out the reaction aldehydo-D-ribose 5-phosphate = D-ribulose 5-phosphate. The protein operates within carbohydrate degradation; pentose phosphate pathway; D-ribose 5-phosphate from D-ribulose 5-phosphate (non-oxidative stage): step 1/1. In terms of biological role, catalyzes the reversible conversion of ribose-5-phosphate to ribulose 5-phosphate. This Methanococcus maripaludis (strain C5 / ATCC BAA-1333) protein is Ribose-5-phosphate isomerase A.